Reading from the N-terminus, the 288-residue chain is Structure-specific endonuclease subunit SLX1 (288 aa).

The 84-residue stretch at 7 to 90 (PFYGVYLLQS…QHPNMTRLIT (84 aa)) folds into the GIY-YIG domain.

Belongs to the SLX1 family. As to quaternary structure, forms a heterodimer with SLX4. A divalent metal cation serves as cofactor.

The protein localises to the nucleus. In terms of biological role, catalytic subunit of the SLX1-SLX4 structure-specific endonuclease that resolves DNA secondary structures generated during DNA repair and recombination. Has endonuclease activity towards branched DNA substrates, introducing single-strand cuts in duplex DNA close to junctions with ss-DNA. The sequence is that of Structure-specific endonuclease subunit SLX1 from Yarrowia lipolytica (strain CLIB 122 / E 150) (Yeast).